We begin with the raw amino-acid sequence, 644 residues long: Exoribonuclease 2 (644 aa).

An RNB domain is found at 189 to 516 (REDLTALDFV…NHRLLKAVIK (328 aa)). The 83-residue stretch at 561-643 (DTRFAAEIVD…ETRSIIARPV (83 aa)) folds into the S1 motif domain.

It belongs to the RNR ribonuclease family. RNase II subfamily.

It is found in the cytoplasm. It catalyses the reaction Exonucleolytic cleavage in the 3'- to 5'-direction to yield nucleoside 5'-phosphates.. Involved in mRNA degradation. Hydrolyzes single-stranded polyribonucleotides processively in the 3' to 5' direction. The protein is Exoribonuclease 2 of Shigella boydii serotype 18 (strain CDC 3083-94 / BS512).